The sequence spans 69 residues: Ubiquitin-ribosomal protein eL40 fusion protein (69 aa).

Residues 1–17 (NIQKESTLHLVLRLRGG) enclose the Ubiquitin-like domain. A Glycyl lysine isopeptide (Lys-Gly) (interchain with G-Cter in ubiquitin) cross-link involves residue lysine 4. Residue glycine 17 forms a Glycyl lysine isopeptide (Gly-Lys) (interchain with K-? in acceptor proteins) linkage. N6,N6,N6-trimethyllysine is present on lysine 39.

This sequence in the N-terminal section; belongs to the ubiquitin family. In the C-terminal section; belongs to the eukaryotic ribosomal protein eL40 family. In terms of assembly, part of the 60S ribosomal subunit. Post-translationally, trimethylation of Lys-39 ('Lys-22' of the mature chain) by SMYD5 promotes translation elongation and protein synthesis.

It localises to the cytoplasm. It is found in the nucleus. Exists either covalently attached to another protein, or free (unanchored). When covalently bound, it is conjugated to target proteins via an isopeptide bond either as a monomer (monoubiquitin), a polymer linked via different Lys residues of the ubiquitin (polyubiquitin chains) or a linear polymer linked via the initiator Met of the ubiquitin (linear polyubiquitin chains). Polyubiquitin chains, when attached to a target protein, have different functions depending on the Lys residue of the ubiquitin that is linked: Lys-6-linked may be involved in DNA repair; Lys-11-linked is involved in ERAD (endoplasmic reticulum-associated degradation) and in cell-cycle regulation; Lys-29-linked is involved in proteotoxic stress response and cell cycle; Lys-33-linked is involved in kinase modification; Lys-48-linked is involved in protein degradation via the proteasome; Lys-63-linked is involved in endocytosis, DNA-damage responses as well as in signaling processes leading to activation of the transcription factor NF-kappa-B. Linear polymer chains formed via attachment by the initiator Met lead to cell signaling. Ubiquitin is usually conjugated to Lys residues of target proteins, however, in rare cases, conjugation to Cys or Ser residues has been observed. When polyubiquitin is free (unanchored-polyubiquitin), it also has distinct roles, such as in activation of protein kinases, and in signaling. In terms of biological role, component of the 60S subunit of the ribosome. The sequence is that of Ubiquitin-ribosomal protein eL40 fusion protein (UBA52) from Gallus gallus (Chicken).